Here is a 429-residue protein sequence, read N- to C-terminus: Serine hydroxymethyltransferase (429 aa).

Residues L133 and G137–L139 contribute to the (6S)-5,6,7,8-tetrahydrofolate site. At K243 the chain carries N6-(pyridoxal phosphate)lysine. E259 is a binding site for (6S)-5,6,7,8-tetrahydrofolate.

It belongs to the SHMT family. In terms of assembly, homodimer. It depends on pyridoxal 5'-phosphate as a cofactor.

The protein localises to the cytoplasm. It catalyses the reaction (6R)-5,10-methylene-5,6,7,8-tetrahydrofolate + glycine + H2O = (6S)-5,6,7,8-tetrahydrofolate + L-serine. It functions in the pathway one-carbon metabolism; tetrahydrofolate interconversion. It participates in amino-acid biosynthesis; glycine biosynthesis; glycine from L-serine: step 1/1. Its function is as follows. Catalyzes the reversible interconversion of serine and glycine with tetrahydrofolate (THF) serving as the one-carbon carrier. This reaction serves as the major source of one-carbon groups required for the biosynthesis of purines, thymidylate, methionine, and other important biomolecules. Also exhibits THF-independent aldolase activity toward beta-hydroxyamino acids, producing glycine and aldehydes, via a retro-aldol mechanism. This chain is Serine hydroxymethyltransferase, found in Aster yellows witches'-broom phytoplasma (strain AYWB).